Reading from the N-terminus, the 206-residue chain is Protein-methionine-sulfoxide reductase heme-binding subunit MsrQ (206 aa).

Helical transmembrane passes span 8–28, 82–102, 116–136, and 153–173; these read IVWLKVLLHLAGLLPFLWLVW, LWCFAWATLHLTSYALLELGI, PYLTLGIISWFILFALTLTST, and FVYLVAILAPIHYLWSVKILS.

It belongs to the MsrQ family. Heterodimer of a catalytic subunit (MsrP) and a heme-binding subunit (MsrQ). Requires FMN as cofactor. The cofactor is heme b.

Its subcellular location is the cell inner membrane. Part of the MsrPQ system that repairs oxidized periplasmic proteins containing methionine sulfoxide residues (Met-O), using respiratory chain electrons. Thus protects these proteins from oxidative-stress damage caused by reactive species of oxygen and chlorine generated by the host defense mechanisms. MsrPQ is essential for the maintenance of envelope integrity under bleach stress, rescuing a wide series of structurally unrelated periplasmic proteins from methionine oxidation. MsrQ provides electrons for reduction to the reductase catalytic subunit MsrP, using the quinone pool of the respiratory chain. The protein is Protein-methionine-sulfoxide reductase heme-binding subunit MsrQ of Citrobacter koseri (strain ATCC BAA-895 / CDC 4225-83 / SGSC4696).